The chain runs to 448 residues: Adenylosuccinate synthetase (448 aa).

Residues G36–K42 and G64–T66 contribute to the GTP site. D37 acts as the Proton acceptor in catalysis. D37 and G64 together coordinate Mg(2+). IMP is bound by residues D37–K40, N62–H65, T154, R168, N246, T261, and R325. Catalysis depends on H65, which acts as the Proton donor. A substrate-binding site is contributed by V321–R327. GTP-binding positions include R327, K353–D355, and G436–G438.

This sequence belongs to the adenylosuccinate synthetase family. As to quaternary structure, homodimer. Mg(2+) serves as cofactor.

It localises to the cytoplasm. The enzyme catalyses IMP + L-aspartate + GTP = N(6)-(1,2-dicarboxyethyl)-AMP + GDP + phosphate + 2 H(+). Its pathway is purine metabolism; AMP biosynthesis via de novo pathway; AMP from IMP: step 1/2. In terms of biological role, plays an important role in the de novo pathway and in the salvage pathway of purine nucleotide biosynthesis. Catalyzes the first committed step in the biosynthesis of AMP from IMP. The chain is Adenylosuccinate synthetase from Drosophila mojavensis (Fruit fly).